A 261-amino-acid polypeptide reads, in one-letter code: Vacuolar protein sorting-associated protein 37D (261 aa).

Residues Ala-93–Ala-182 enclose the VPS37 C-terminal domain. A disordered region spans residues Leu-172–Arg-261. Residues Pro-181 to Ala-195 show a composition bias toward low complexity. Composition is skewed to pro residues over residues Gly-215–Leu-224 and Pro-231–Arg-261.

Belongs to the VPS37 family. As to quaternary structure, component of the ESCRT-I complex (endosomal sorting complex required for transport I) which consists of TSG101, VPS28, a VPS37 protein (VPS37A to -D) and MVB12A or MVB12B in a 1:1:1:1 stoichiometry. Interacts with TSG101 and MVB12A. Component of the ESCRT-I complex (endosomal sorting complex required for transport I) which consists of TSG101, VPS28, a VPS37 protein (VPS37A to -D) and UBAP1 in a 1:1:1:1 stoichiometry.

It is found in the late endosome membrane. In terms of biological role, component of the ESCRT-I complex, a regulator of vesicular trafficking process. Required for the sorting of endocytic ubiquitinated cargos into multivesicular bodies. May be involved in cell growth and differentiation. The sequence is that of Vacuolar protein sorting-associated protein 37D from Mus musculus (Mouse).